Here is a 144-residue protein sequence, read N- to C-terminus: Vasopressin-neurophysin 2-copeptin (144 aa).

A disulfide bridge links C1 with C6. G9 carries the glycine amide modification. Intrachain disulfides connect C22/C66, C25/C39, C33/C56, C40/C46, C73/C85, C79/C97, and C86/C91. N112 carries an N-linked (GlcNAc...) asparagine glycan.

This sequence belongs to the vasopressin/oxytocin family. In terms of assembly, interacts with vasopressin receptors V1bR/AVPR1B (Ki=85 pM), V1aR/AVPR1A (Ki=0.6 nM) and V2R/AVPR2 (Ki=4.9 nM). Interacts with oxytocin receptor (OXTR) (Ki=110 nM).

Its subcellular location is the secreted. In terms of biological role, neurophysin 2 specifically binds vasopressin. Vasopressin has a direct antidiuretic action on the kidney, it also causes vasoconstriction of the peripheral vessels. Acts by binding to vasopressin receptors (V1bR/AVPR1B, V1aR/AVPR1A, and V2R/AVPR2). The polypeptide is Vasopressin-neurophysin 2-copeptin (AVP) (Cavia porcellus (Guinea pig)).